We begin with the raw amino-acid sequence, 193 residues long: Large ribosomal subunit protein bL25 (193 aa).

The protein belongs to the bacterial ribosomal protein bL25 family. CTC subfamily. As to quaternary structure, part of the 50S ribosomal subunit; part of the 5S rRNA/L5/L18/L25 subcomplex. Contacts the 5S rRNA. Binds to the 5S rRNA independently of L5 and L18.

Functionally, this is one of the proteins that binds to the 5S RNA in the ribosome where it forms part of the central protuberance. The sequence is that of Large ribosomal subunit protein bL25 from Hydrogenovibrio crunogenus (strain DSM 25203 / XCL-2) (Thiomicrospira crunogena).